The following is a 303-amino-acid chain: Putative S-adenosyl-L-methionine-dependent methyltransferase MAP_4197c (303 aa).

S-adenosyl-L-methionine is bound by residues aspartate 129 and 158 to 159 (DL).

Belongs to the UPF0677 family.

Functionally, exhibits S-adenosyl-L-methionine-dependent methyltransferase activity. This is Putative S-adenosyl-L-methionine-dependent methyltransferase MAP_4197c from Mycolicibacterium paratuberculosis (strain ATCC BAA-968 / K-10) (Mycobacterium paratuberculosis).